The primary structure comprises 394 residues: Actin-related protein 2 (394 aa).

Position 1 is an N-acetylmethionine (M1). ATP contacts are provided by residues 160–162 (GDG) and 214–218 (RMIKE). Position 299 is an N6-acetyllysine (K299). 305 to 310 (GGSTMY) is a binding site for ATP. Residue K322 is modified to N6-acetyllysine.

This sequence belongs to the actin family. ARP2 subfamily. In terms of assembly, component of the Arp2/3 complex composed of ACTR2/ARP2, ACTR3/ARP3, ARPC1B/p41-ARC, ARPC2/p34-ARC, ARPC3/p21-ARC, ARPC4/p20-ARC and ARPC5/p16-ARC.

Its subcellular location is the cytoplasm. The protein localises to the cytoskeleton. The protein resides in the cell projection. It is found in the nucleus. ATP-binding component of the Arp2/3 complex, a multiprotein complex that mediates actin polymerization upon stimulation by nucleation-promoting factor (NPF). The Arp2/3 complex mediates the formation of branched actin networks in the cytoplasm, providing the force for cell motility. Seems to contact the pointed end of the daughter actin filament. In addition to its role in the cytoplasmic cytoskeleton, the Arp2/3 complex also promotes actin polymerization in the nucleus, thereby regulating gene transcription and repair of damaged DNA. The Arp2/3 complex promotes homologous recombination (HR) repair in response to DNA damage by promoting nuclear actin polymerization, leading to drive motility of double-strand breaks (DSBs). The polypeptide is Actin-related protein 2 (Actr2) (Rattus norvegicus (Rat)).